Here is a 312-residue protein sequence, read N- to C-terminus: Olfactory receptor 1D2 (312 aa).

Residues Met-1–Arg-25 lie on the Extracellular side of the membrane. A glycan (N-linked (GlcNAc...) asparagine) is linked at Asn-5. A helical membrane pass occupies residues Ile-26–Ile-49. Over Ser-50 to Thr-57 the chain is Cytoplasmic. The chain crosses the membrane as a helical span at residues Pro-58 to Pro-79. Residues Lys-80–Gln-100 lie on the Extracellular side of the membrane. Cys-97 and Cys-189 are joined by a disulfide. Residues Leu-101–Tyr-120 form a helical membrane-spanning segment. Residues Asp-121–Lys-139 are Cytoplasmic-facing. A helical membrane pass occupies residues Leu-140 to Ile-158. At His-159–His-196 the chain is on the extracellular side. A glycan (N-linked (GlcNAc...) asparagine) is linked at Asn-195. The helical transmembrane segment at Thr-197–Val-219 threads the bilayer. At Leu-220 to Lys-236 the chain is on the cytoplasmic side. Residues Ala-237–Tyr-259 form a helical membrane-spanning segment. The Extracellular portion of the chain corresponds to Leu-260 to Ser-271. Residues Val-272–Leu-291 form a helical membrane-spanning segment. Residues Arg-292–Thr-312 are Cytoplasmic-facing.

It belongs to the G-protein coupled receptor 1 family.

The protein localises to the cell membrane. In terms of biological role, odorant receptor. The chain is Olfactory receptor 1D2 (OR1D2) from Pan troglodytes (Chimpanzee).